Consider the following 193-residue polypeptide: Holliday junction branch migration complex subunit RuvA (193 aa).

Positions 1 to 64 (MIGRIAGTLI…EDAHLLYGFG (64 aa)) are domain I. Residues 65 to 143 (SAAERNTFRE…AELGHAPGAA (79 aa)) form a domain II region. A flexible linker region spans residues 144–151 (PVHDSAVD). The domain III stretch occupies residues 151–193 (DILNALLALGYSEKEAATAIKQVPAGTGVSDGIKLALKALSKA).

Belongs to the RuvA family. In terms of assembly, homotetramer. Forms an RuvA(8)-RuvB(12)-Holliday junction (HJ) complex. HJ DNA is sandwiched between 2 RuvA tetramers; dsDNA enters through RuvA and exits via RuvB. An RuvB hexamer assembles on each DNA strand where it exits the tetramer. Each RuvB hexamer is contacted by two RuvA subunits (via domain III) on 2 adjacent RuvB subunits; this complex drives branch migration. In the full resolvosome a probable DNA-RuvA(4)-RuvB(12)-RuvC(2) complex forms which resolves the HJ.

The protein localises to the cytoplasm. Functionally, the RuvA-RuvB-RuvC complex processes Holliday junction (HJ) DNA during genetic recombination and DNA repair, while the RuvA-RuvB complex plays an important role in the rescue of blocked DNA replication forks via replication fork reversal (RFR). RuvA specifically binds to HJ cruciform DNA, conferring on it an open structure. The RuvB hexamer acts as an ATP-dependent pump, pulling dsDNA into and through the RuvAB complex. HJ branch migration allows RuvC to scan DNA until it finds its consensus sequence, where it cleaves and resolves the cruciform DNA. The protein is Holliday junction branch migration complex subunit RuvA of Cupriavidus pinatubonensis (strain JMP 134 / LMG 1197) (Cupriavidus necator (strain JMP 134)).